Here is a 145-residue protein sequence, read N- to C-terminus: D-aminoacyl-tRNA deacylase (145 aa).

Residues 137–138 (GP) carry the Gly-cisPro motif, important for rejection of L-amino acids motif.

It belongs to the DTD family. Homodimer.

It is found in the cytoplasm. It carries out the reaction glycyl-tRNA(Ala) + H2O = tRNA(Ala) + glycine + H(+). The enzyme catalyses a D-aminoacyl-tRNA + H2O = a tRNA + a D-alpha-amino acid + H(+). Its function is as follows. An aminoacyl-tRNA editing enzyme that deacylates mischarged D-aminoacyl-tRNAs. Also deacylates mischarged glycyl-tRNA(Ala), protecting cells against glycine mischarging by AlaRS. Acts via tRNA-based rather than protein-based catalysis; rejects L-amino acids rather than detecting D-amino acids in the active site. By recycling D-aminoacyl-tRNA to D-amino acids and free tRNA molecules, this enzyme counteracts the toxicity associated with the formation of D-aminoacyl-tRNA entities in vivo and helps enforce protein L-homochirality. This Deinococcus radiodurans (strain ATCC 13939 / DSM 20539 / JCM 16871 / CCUG 27074 / LMG 4051 / NBRC 15346 / NCIMB 9279 / VKM B-1422 / R1) protein is D-aminoacyl-tRNA deacylase.